The sequence spans 332 residues: Glycerol-3-phosphate dehydrogenase [NAD(P)+] (332 aa).

Residues tryptophan 11, arginine 30, and lysine 108 each coordinate NADPH. Positions 108, 137, and 139 each coordinate sn-glycerol 3-phosphate. NADPH is bound at residue alanine 141. Sn-glycerol 3-phosphate-binding residues include lysine 192, aspartate 245, serine 255, arginine 256, and asparagine 257. The Proton acceptor role is filled by lysine 192. Residue arginine 256 coordinates NADPH. NADPH-binding residues include valine 280 and glutamate 282.

Belongs to the NAD-dependent glycerol-3-phosphate dehydrogenase family.

It localises to the cytoplasm. It catalyses the reaction sn-glycerol 3-phosphate + NAD(+) = dihydroxyacetone phosphate + NADH + H(+). The enzyme catalyses sn-glycerol 3-phosphate + NADP(+) = dihydroxyacetone phosphate + NADPH + H(+). It participates in membrane lipid metabolism; glycerophospholipid metabolism. Catalyzes the reduction of the glycolytic intermediate dihydroxyacetone phosphate (DHAP) to sn-glycerol 3-phosphate (G3P), the key precursor for phospholipid synthesis. This chain is Glycerol-3-phosphate dehydrogenase [NAD(P)+], found in Burkholderia orbicola (strain AU 1054).